The following is a 138-amino-acid chain: Putative pre-16S rRNA nuclease (138 aa).

It belongs to the YqgF nuclease family.

The protein resides in the cytoplasm. Could be a nuclease involved in processing of the 5'-end of pre-16S rRNA. The polypeptide is Putative pre-16S rRNA nuclease (Bacteroides fragilis (strain ATCC 25285 / DSM 2151 / CCUG 4856 / JCM 11019 / LMG 10263 / NCTC 9343 / Onslow / VPI 2553 / EN-2)).